Consider the following 124-residue polypeptide: Small ribosomal subunit protein bS6 (124 aa).

A disordered region spans residues 99 to 124 (PLPAPRIVPGSEPEPVQQQEAAAVEA). Residues 111–124 (PEPVQQQEAAAVEA) show a composition bias toward low complexity.

This sequence belongs to the bacterial ribosomal protein bS6 family.

Binds together with bS18 to 16S ribosomal RNA. In Prochlorococcus marinus (strain MIT 9313), this protein is Small ribosomal subunit protein bS6.